The primary structure comprises 459 residues: E3 ubiquitin-protein ligase RNF14 (459 aa).

The 120-residue stretch at 10–129 (DELLALASIY…QFLKEETLDF (120 aa)) folds into the RWD domain. The interval 141-169 (SGSQPQCEPAQKHAADASGEKSKVQDLDP) is disordered. The segment covering 150-169 (AQKHAADASGEKSKVQDLDP) has biased composition (basic and acidic residues). The interval 200 to 441 (KAFCCGICYS…NPDSPCYNQL (242 aa)) is TRIAD supradomain. Zn(2+) is bound by residues Cys204, Cys207, Cys222, His224, Cys227, Cys230, Cys249, Cys254, Cys293, Cys298, Cys313, Cys316, Cys321, Cys324, His329, Cys334, Cys388, and Cys391. RING-type zinc fingers lie at residues 204-249 (CGIC…CLNC) and 204-254 (CGIC…EPKC). An IBR-type zinc finger spans residues 273-334 (ARYDRLLLQS…RRSYHGLSHC (62 aa)). The segment at 388–417 (CPCCGTNIQKAHGCNKMTCSSCQKYFCWIC) adopts an RING-type 2; atypical zinc-finger fold. Cys401 is an active-site residue. Zn(2+) contacts are provided by Cys406, Cys409, Cys414, Cys417, His429, and Cys437.

It belongs to the RBR family. RNF14 subfamily.

The protein resides in the cytoplasm. It is found in the nucleus. The catalysed reaction is [E2 ubiquitin-conjugating enzyme]-S-ubiquitinyl-L-cysteine + [acceptor protein]-L-lysine = [E2 ubiquitin-conjugating enzyme]-L-cysteine + [acceptor protein]-N(6)-ubiquitinyl-L-lysine.. Its pathway is protein modification; protein ubiquitination. In terms of biological role, E3 ubiquitin-protein ligase that plays a key role in the RNF14-RNF25 translation quality control pathway, a pathway that takes place when a ribosome has stalled during translation, and which promotes ubiquitination and degradation of translation factors on stalled ribosomes. Recruited to stalled ribosomes by the ribosome collision sensor GCN1 and mediates 'Lys-6'-linked ubiquitination of target proteins, leading to their degradation. Mediates ubiquitination of eef1a1/eEF1A and etf1/eRF1 translation factors on stalled ribosomes, leading to their degradation. Specifically required to resolve RNA-protein cross-links caused by reactive aldehydes, which trigger translation stress by stalling ribosomes: acts by catalying 'Lys-6'-linked ubiquitination of RNA-protein cross-links, leading to their removal by the ATP-dependent unfoldase VCP and subsequent degradation by the proteasome. Independently of its function in the response to stalled ribosomes, acts as a regulator of transcription in Wnt signaling via its interaction with TCF transcription factors (tcf7/tcf1, tcf7l1/tcf3 and tcf7l2/tcf4). The sequence is that of E3 ubiquitin-protein ligase RNF14 from Danio rerio (Zebrafish).